Consider the following 324-residue polypeptide: NADH-ubiquinone oxidoreductase chain 1 (324 aa).

The next 9 helical transmembrane spans lie at 9–29, 43–63, 75–95, 106–126, 146–166, 177–197, 237–257, 259–279, and 299–319; these read IINP…LTLL, PNIV…KLFI, FLFL…WAPM, LGVL…LGSG, ISYE…TGGF, SIWL…STLA, ILLM…IPAF, ELTA…FLWV, and FLPL…AMAG.

It belongs to the complex I subunit 1 family.

The protein resides in the mitochondrion inner membrane. The catalysed reaction is a ubiquinone + NADH + 5 H(+)(in) = a ubiquinol + NAD(+) + 4 H(+)(out). Its function is as follows. Core subunit of the mitochondrial membrane respiratory chain NADH dehydrogenase (Complex I) that is believed to belong to the minimal assembly required for catalysis. Complex I functions in the transfer of electrons from NADH to the respiratory chain. The immediate electron acceptor for the enzyme is believed to be ubiquinone. This chain is NADH-ubiquinone oxidoreductase chain 1 (MT-ND1), found in Salmo salar (Atlantic salmon).